We begin with the raw amino-acid sequence, 72 residues long: Translation initiation factor IF-1 (72 aa).

Positions 1 to 72 constitute an S1-like domain; it reads MSKDDVIEMQ…TRGRITWRAK (72 aa).

Belongs to the IF-1 family. As to quaternary structure, component of the 30S ribosomal translation pre-initiation complex which assembles on the 30S ribosome in the order IF-2 and IF-3, IF-1 and N-formylmethionyl-tRNA(fMet); mRNA recruitment can occur at any time during PIC assembly.

It is found in the cytoplasm. Its function is as follows. One of the essential components for the initiation of protein synthesis. Stabilizes the binding of IF-2 and IF-3 on the 30S subunit to which N-formylmethionyl-tRNA(fMet) subsequently binds. Helps modulate mRNA selection, yielding the 30S pre-initiation complex (PIC). Upon addition of the 50S ribosomal subunit IF-1, IF-2 and IF-3 are released leaving the mature 70S translation initiation complex. The protein is Translation initiation factor IF-1 of Clostridium beijerinckii (strain ATCC 51743 / NCIMB 8052) (Clostridium acetobutylicum).